We begin with the raw amino-acid sequence, 417 residues long: Serine hydroxymethyltransferase (417 aa).

(6S)-5,6,7,8-tetrahydrofolate contacts are provided by residues L112 and 116 to 118; that span reads GHL. An N6-(pyridoxal phosphate)lysine modification is found at K221. E247 is a (6S)-5,6,7,8-tetrahydrofolate binding site.

The protein belongs to the SHMT family. As to quaternary structure, homodimer. It depends on pyridoxal 5'-phosphate as a cofactor.

The protein resides in the cytoplasm. The catalysed reaction is (6R)-5,10-methylene-5,6,7,8-tetrahydrofolate + glycine + H2O = (6S)-5,6,7,8-tetrahydrofolate + L-serine. The protein operates within one-carbon metabolism; tetrahydrofolate interconversion. It participates in amino-acid biosynthesis; glycine biosynthesis; glycine from L-serine: step 1/1. Its function is as follows. Catalyzes the reversible interconversion of serine and glycine with tetrahydrofolate (THF) serving as the one-carbon carrier. This reaction serves as the major source of one-carbon groups required for the biosynthesis of purines, thymidylate, methionine, and other important biomolecules. Also exhibits THF-independent aldolase activity toward beta-hydroxyamino acids, producing glycine and aldehydes, via a retro-aldol mechanism. This is Serine hydroxymethyltransferase from Borreliella afzelii (strain PKo) (Borrelia afzelii).